A 356-amino-acid chain; its full sequence is Gluconolactonase (356 aa).

A signal peptide (tat-type signal) is located at residues 1–35; the sequence is MTTGRMSRRECLSAAVMVPIAAMTATATITGSAQA.

Homodimer. In terms of processing, predicted to be exported by the Tat system. The position of the signal peptide cleavage has been experimentally proven.

The protein resides in the periplasm. The catalysed reaction is D-glucono-1,5-lactone + H2O = D-gluconate + H(+). Its pathway is carbohydrate acid metabolism; D-gluconate biosynthesis; D-gluconate from D-glucono-1,5-lactone: step 1/1. Hydrolyzes the gluconolactone formed by glucose-fructose oxidoreductase, and that formed in aerobic conditions by the glucose dehydrogenase present. This is Gluconolactonase (gnl) from Zymomonas mobilis subsp. mobilis (strain ATCC 31821 / ZM4 / CP4).